A 486-amino-acid polypeptide reads, in one-letter code: Cardiolipin synthase A (486 aa).

Transmembrane regions (helical) follow at residues 3-23 and 38-58; these read TFYT…IAGV and MTWL…YFAF. PLD phosphodiesterase domains are found at residues 219–246 and 399–426; these read MDLR…VDPR and EDGL…DMRS. Catalysis depends on residues histidine 224, lysine 226, aspartate 231, histidine 404, lysine 406, and aspartate 411.

It belongs to the phospholipase D family. Cardiolipin synthase subfamily. ClsA sub-subfamily.

It localises to the cell inner membrane. It catalyses the reaction 2 a 1,2-diacyl-sn-glycero-3-phospho-(1'-sn-glycerol) = a cardiolipin + glycerol. Catalyzes the reversible phosphatidyl group transfer from one phosphatidylglycerol molecule to another to form cardiolipin (CL) (diphosphatidylglycerol) and glycerol. This is Cardiolipin synthase A from Proteus mirabilis (strain HI4320).